The following is a 287-amino-acid chain: ATP synthase gamma chain (287 aa).

The protein belongs to the ATPase gamma chain family. In terms of assembly, F-type ATPases have 2 components, CF(1) - the catalytic core - and CF(0) - the membrane proton channel. CF(1) has five subunits: alpha(3), beta(3), gamma(1), delta(1), epsilon(1). CF(0) has three main subunits: a, b and c.

Its subcellular location is the cell inner membrane. Functionally, produces ATP from ADP in the presence of a proton gradient across the membrane. The gamma chain is believed to be important in regulating ATPase activity and the flow of protons through the CF(0) complex. The sequence is that of ATP synthase gamma chain from Xylella fastidiosa (strain M23).